The primary structure comprises 730 residues: Exostosin-1a (730 aa).

The Cytoplasmic segment spans residues 1–6 (MQAKKR). A helical; Signal-anchor for type II membrane protein membrane pass occupies residues 7 to 27 (YLILFSAGVCLILLFYLQGPA). Residues 28–730 (SRRTPKRGDD…RKKYRDIERL (703 aa)) are Lumenal-facing. N-linked (GlcNAc...) asparagine glycosylation occurs at Asn314. Residues Arg533, Asp549, Glu550, Asp551, Glu637, Asp638, and Arg685 each coordinate UDP-N-acetyl-alpha-D-glucosamine. Asp551 contributes to the Mn(2+) binding site. A disulfide bond links Cys636 and Cys688. Asp638 is a catalytic residue.

Belongs to the glycosyltransferase 47 family. The cofactor is Mn(2+).

It localises to the endoplasmic reticulum membrane. The catalysed reaction is 3-O-{[(1-&gt;4)-beta-D-GlcA-(1-&gt;4)-alpha-D-GlcNAc](n)-(1-&gt;4)-beta-D-GlcA-(1-&gt;3)-beta-D-Gal-(1-&gt;3)-beta-D-Gal-(1-&gt;4)-beta-D-Xyl}-L-seryl-[protein] + UDP-N-acetyl-alpha-D-glucosamine = 3-O-{alpha-D-GlcNAc-[(1-&gt;4)-beta-D-GlcA-(1-&gt;4)-alpha-D-GlcNAc](n)-(1-&gt;4)-beta-D-GlcA-(1-&gt;3)-beta-D-Gal-(1-&gt;3)-beta-D-Gal-(1-&gt;4)-beta-D-Xyl}-L-seryl-[protein] + UDP + H(+). It carries out the reaction 3-O-{alpha-D-GlcNAc-[(1-&gt;4)-beta-D-GlcA-(1-&gt;4)-alpha-D-GlcNAc](n)-(1-&gt;4)-beta-D-GlcA-(1-&gt;3)-beta-D-Gal-(1-&gt;3)-beta-D-Gal-(1-&gt;4)-beta-D-Xyl}-L-seryl-[protein] + UDP-alpha-D-glucuronate = 3-O-{[(1-&gt;4)-beta-D-GlcA-(1-&gt;4)-alpha-D-GlcNAc](n+1)-(1-&gt;4)-beta-D-GlcA-(1-&gt;3)-beta-D-Gal-(1-&gt;3)-beta-D-Gal-(1-&gt;4)-beta-D-Xyl}-L-seryl-[protein] + UDP + H(+). It functions in the pathway protein modification; protein glycosylation. Its function is as follows. Glycosyltransferase required for the biosynthesis of heparan-sulfate. The sequence is that of Exostosin-1a (ext1a) from Danio rerio (Zebrafish).